A 127-amino-acid polypeptide reads, in one-letter code: Glycine cleavage system H protein (127 aa).

Positions 22-104 (EVVIGITHFA…YEGAWMVKVE (83 aa)) constitute a Lipoyl-binding domain. The residue at position 63 (Lys63) is an N6-lipoyllysine.

Belongs to the GcvH family. As to quaternary structure, the glycine cleavage system is composed of four proteins: P, T, L and H. Requires (R)-lipoate as cofactor.

The glycine cleavage system catalyzes the degradation of glycine. The H protein shuttles the methylamine group of glycine from the P protein to the T protein. In terms of biological role, is also involved in protein lipoylation via its role as an octanoyl/lipoyl carrier protein intermediate. The sequence is that of Glycine cleavage system H protein from Bacillus cereus (strain B4264).